An 885-amino-acid chain; its full sequence is Exosome complex component 10 (885 aa).

Lys-19 participates in a covalent cross-link: Glycyl lysine isopeptide (Lys-Gly) (interchain with G-Cter in SUMO2). Residues 289 to 455 form the 3'-5' exonuclease domain; sequence HFISSLDELV…YIYDKMRLEM (167 aa). Mg(2+)-binding residues include Asp-313, Glu-315, Asp-371, and Asp-440. Residues 503–583 form the HRDC domain; the sequence is NTQQLTAFQL…QQAREMPLLK (81 aa). Lys-583 participates in a covalent cross-link: Glycyl lysine isopeptide (Lys-Gly) (interchain with G-Cter in SUMO1); alternate. Lys-583 participates in a covalent cross-link: Glycyl lysine isopeptide (Lys-Gly) (interchain with G-Cter in SUMO2); alternate. Lys-710 participates in a covalent cross-link: Glycyl lysine isopeptide (Lys-Gly) (interchain with G-Cter in SUMO2). Composition is skewed to basic and acidic residues over residues 776–794 and 804–816; these read AAKKRERATSDPRTTEQKQ and KPKDPEPPEKEFT. The tract at residues 776–885 is disordered; it reads AAKKRERATS…RGFRYNWPQR (110 aa). Ser-821 carries the post-translational modification Phosphoserine. Residues Lys-826, Lys-833, and Lys-859 each participate in a glycyl lysine isopeptide (Lys-Gly) (interchain with G-Cter in SUMO2) cross-link. Residues 831–848 show a composition bias toward polar residues; the sequence is NSKSKVSSQFDPNKQTPS. The segment covering 861 to 871 has biased composition (polar residues); the sequence is SVGNKSMSFPT. Lys-873 participates in a covalent cross-link: Glycyl lysine isopeptide (Lys-Gly) (interchain with G-Cter in SUMO2).

It belongs to the exosome component 10/RRP6 family. Component of the RNA exosome complex. The catalytically inactive RNA exosome core complex (Exo-9) associates with the catalytic subunit EXOSC10/RRP6 (via its N-terminus). Exo-9 may associate with DIS3 to form the nucleolar exosome complex, or DIS3L to form the cytoplasmic exosome complex. The RNA exosome complex interacts with cofactors C1D/RRP47, MPHOSPH6/MPP6 and MTREX/MTR4. Interacts with MTREX; the interaction with MTREX mediates the association of MTREX with nuclear RNA exosomes. Part of the small subunit (SSU) processome, composed of more than 70 proteins and the RNA chaperone small nucleolar RNA (snoRNA) U3. Interacts with ALYREF/THOC4. Interacts with DHX36; this interaction occurs in a RNase-insensitive manner. Interacts with NRDE2. Interacts (via C-terminus) with USP36 (via C-terminus); the interaction is facilitated by the association with RNA and promotes sumoylation of EXOSC10. The cofactor is Mg(2+). Sumoylated by USP36; sumoylation does not significantly affect EXOSC10 nucleolar localization and association with core exosome and USP36, but regulates the nucleolar RNA exosome activity in rRNA processing by promoting binding of EXOSC10 to pre-rRNAs. Effects of sumoylation on EXOSC10 levels vary between different studies. Sumoylation of EXOSC10 is required for the modulation of EXOSC10 effects on cellular protein translation and cell proliferation. Sumoylation is promoted by mild hypothermia.

The protein localises to the cytoplasm. It is found in the nucleus. The protein resides in the nucleolus. Its subcellular location is the nucleoplasm. Its activity is regulated as follows. Arginine-rich dipeptide repeat proteins expressed from C9orf72-derived repeat RNA interact with EXOSC10 and inhibit its ability to promote degradation of this RNA. Catalytic component of the RNA exosome complex which has 3'-&gt;5' exoribonuclease activity and participates in a multitude of cellular RNA processing and degradation events. In the nucleus, the RNA exosome complex is involved in proper maturation of stable RNA species such as rRNA, snRNA and snoRNA, in the elimination of RNA processing by-products and non-coding 'pervasive' transcripts, such as antisense RNA species and promoter-upstream transcripts (PROMPTs), and of mRNAs with processing defects, thereby limiting or excluding their export to the cytoplasm. Part of the small subunit (SSU) processome, first precursor of the small eukaryotic ribosomal subunit. During the assembly of the SSU processome in the nucleolus, many ribosome biogenesis factors, an RNA chaperone and ribosomal proteins associate with the nascent pre-rRNA and work in concert to generate RNA folding, modifications, rearrangements and cleavage as well as targeted degradation of pre-ribosomal RNA by the RNA exosome. The RNA exosome may be involved in Ig class switch recombination (CSR) and/or Ig variable region somatic hypermutation (SHM) by targeting AICDA deamination activity to transcribed dsDNA substrates. In the cytoplasm, the RNA exosome complex is involved in general mRNA turnover and specifically degrades inherently unstable mRNAs containing AU-rich elements (AREs) within their 3' untranslated regions, and in RNA surveillance pathways, preventing translation of aberrant mRNAs. It seems to be involved in degradation of histone mRNA. EXOSC10 is required for nucleolar localization of C1D and probably mediates the association of MTREX, C1D and MPHOSPH6 with the RNA exosome involved in the maturation of 5.8S rRNA. Plays a role in the recruitment of replication protein A complex (RPA) and RAD51 to DNA double-strand breaks caused by irradiation, contributing to DNA repair by homologous recombination. Regulates levels of damage-induced RNAs in order to prevent DNA-RNA hybrid formation at DNA double-strand breaks and limit DNA end resection after damage. Plays a role in oocyte development, maturation and survival. Required for normal testis development and mitotic division of spermatogonia. Plays a role in proper embryo development. Required for global protein translation. Required for cell proliferation. Regulates metabolism of C9orf72-derived repeat RNA that can be translated into toxic dipeptide repeat proteins. This Homo sapiens (Human) protein is Exosome complex component 10.